A 300-amino-acid chain; its full sequence is Inosose dehydratase (300 aa).

It belongs to the IolE/MocC family. Glutathione serves as cofactor. Co(2+) is required as a cofactor. It depends on Mn(2+) as a cofactor.

It catalyses the reaction scyllo-inosose = 3D-3,5/4-trihydroxycyclohexane-1,2-dione + H2O. Its function is as follows. Catalyzes the dehydration of inosose (2-keto-myo-inositol, 2KMI or 2,4,6/3,5-pentahydroxycyclohexanone) to 3D-(3,5/4)-trihydroxycyclohexane-1,2-dione (D-2,3-diketo-4-deoxy-epi-inositol). The chain is Inosose dehydratase from Mesomycoplasma hyopneumoniae (strain 232) (Mycoplasma hyopneumoniae).